Reading from the N-terminus, the 168-residue chain is Sperm acrosome-associated protein 9 (168 aa).

As to quaternary structure, microtubule inner protein component of sperm flagellar doublet microtubules. Interacts with CABP1 and CALR. Interacts with INCA1. Interacts with microtubules. In terms of tissue distribution, expressed in sperm (at protein level). Expressed from almost all the cell types of testis, with abundant expression in round and elongated spermatids (at protein level). Predominantly expressed in tissues containing motile cilia.

The protein resides in the cytoplasm. It is found in the cytoplasmic vesicle. Its subcellular location is the secretory vesicle. The protein localises to the acrosome. It localises to the cytoskeleton. The protein resides in the cilium basal body. It is found in the flagellum axoneme. Its subcellular location is the cilium axoneme. The protein localises to the nucleus. Microtubule inner protein (MIP) part of the dynein-decorated doublet microtubules (DMTs) of multiciliated respiratory cells and the distal singlet microtubules of monoflagellated spermatozoa. Forms an extensive interaction network cross-linking the lumen of axonemal doublet microtubules. This Mus musculus (Mouse) protein is Sperm acrosome-associated protein 9.